A 431-amino-acid polypeptide reads, in one-letter code: Adenylosuccinate synthetase (431 aa).

Residues 12–18 and 40–42 each bind GTP; these read GDEGKGK and GHT. Asp-13 serves as the catalytic Proton acceptor. Asp-13 and Gly-40 together coordinate Mg(2+). Residues 13–16, 38–41, Thr-129, Arg-143, Gln-224, Thr-239, and Arg-303 each bind IMP; these read DEGK and NAGH. The active-site Proton donor is the His-41. A substrate-binding site is contributed by 299–305; the sequence is VTTGRAR. GTP contacts are provided by residues Arg-305, 331 to 333, and 413 to 415; these read KLD and GVG.

Belongs to the adenylosuccinate synthetase family. In terms of assembly, homodimer. Mg(2+) is required as a cofactor.

It localises to the cytoplasm. The enzyme catalyses IMP + L-aspartate + GTP = N(6)-(1,2-dicarboxyethyl)-AMP + GDP + phosphate + 2 H(+). It participates in purine metabolism; AMP biosynthesis via de novo pathway; AMP from IMP: step 1/2. In terms of biological role, plays an important role in the de novo pathway of purine nucleotide biosynthesis. Catalyzes the first committed step in the biosynthesis of AMP from IMP. This is Adenylosuccinate synthetase from Mycobacterium sp. (strain KMS).